The sequence spans 590 residues: Ras-specific guanine nucleotide-releasing factor RalGPS2 (590 aa).

Residues 49-287 enclose the Ras-GEF domain; it reads TPEEYAGQIT…YKLSLKIEPG (239 aa). Positions 288 to 319 are disordered; it reads ASTPRSAASREDLAGPDIGASPQGGRKSSAAA. Ser-293, Ser-296, and Ser-308 each carry phosphoserine. A PXXP motif is present at residues 331 to 334; the sequence is PQTP. Thr-333 is subject to Phosphothreonine. A phosphoserine mark is found at Ser-336 and Ser-350. Residue Thr-368 is modified to Phosphothreonine. A disordered region spans residues 380–413; sequence DSVMEPHAPSRGQAESSTLSSGISIGSSDGSELS. Ser-381 is subject to Phosphoserine. Positions 394 to 410 are enriched in low complexity; the sequence is ESSTLSSGISIGSSDGS. A Phosphoserine modification is found at Ser-429. The PH domain maps to 464–576; that stretch reads AVTIQGVLRR…WFKHLSAACQ (113 aa). The segment at 466 to 590 is required for stimulation of nucleotide exchange by RALA; that stretch reads TIQGVLRRKT…QVPTNLMTFE (125 aa).

In terms of assembly, interacts with RALA. Interacts with the SH3 domains of GRB2 and PLCG1. Abundant in brain and testis.

The protein localises to the cytoplasm. It is found in the cell membrane. Guanine nucleotide exchange factor for the small GTPase RALA. May be involved in cytoskeletal organization. May also be involved in the stimulation of transcription in a Ras-independent fashion. In Mus musculus (Mouse), this protein is Ras-specific guanine nucleotide-releasing factor RalGPS2 (Ralgps2).